We begin with the raw amino-acid sequence, 137 residues long: Small ribosomal subunit protein uS12 (137 aa).

The tract at residues 1–26 is disordered; that stretch reads MPTINQLVRKPRQSKIKKSTSPALNK. Residues 9-18 show a composition bias toward basic residues; that stretch reads RKPRQSKIKK.

It belongs to the universal ribosomal protein uS12 family. As to quaternary structure, part of the 30S ribosomal subunit. Contacts proteins S8 and S17. May interact with IF1 in the 30S initiation complex.

Its function is as follows. With S4 and S5 plays an important role in translational accuracy. In terms of biological role, interacts with and stabilizes bases of the 16S rRNA that are involved in tRNA selection in the A site and with the mRNA backbone. Located at the interface of the 30S and 50S subunits, it traverses the body of the 30S subunit contacting proteins on the other side and probably holding the rRNA structure together. The combined cluster of proteins S8, S12 and S17 appears to hold together the shoulder and platform of the 30S subunit. The chain is Small ribosomal subunit protein uS12 from Listeria innocua serovar 6a (strain ATCC BAA-680 / CLIP 11262).